The sequence spans 423 residues: Type II methyltransferase M.BamHI (423 aa).

Residues 397–414 (DFRQDHEGNSKGDKKNEN) are compositionally biased toward basic and acidic residues. A disordered region spans residues 397 to 423 (DFRQDHEGNSKGDKKNENNDQISLSLE).

It belongs to the N(4)/N(6)-methyltransferase family.

It catalyses the reaction a 2'-deoxycytidine in DNA + S-adenosyl-L-methionine = an N(4)-methyl-2'-deoxycytidine in DNA + S-adenosyl-L-homocysteine + H(+). In terms of biological role, a beta subtype methylase, recognizes the double-stranded sequence 5'-GGATCC-3', methylates C-5 on both strands, and protects the DNA from cleavage by the BamHI endonuclease. The sequence is that of Type II methyltransferase M.BamHI from Bacillus amyloliquefaciens (Bacillus velezensis).